Reading from the N-terminus, the 307-residue chain is Putative oxidoreductase YceM (307 aa).

The protein belongs to the Gfo/Idh/MocA family.

This chain is Putative oxidoreductase YceM (yceM), found in Salmonella typhimurium (strain LT2 / SGSC1412 / ATCC 700720).